A 380-amino-acid chain; its full sequence is Cytochrome b (380 aa).

4 helical membrane passes run Phe-34–Ala-54, Trp-78–Ile-99, Trp-114–Leu-134, and Phe-179–Thr-199. 2 residues coordinate heme b: His-84 and His-98. Positions 183 and 197 each coordinate heme b. His-202 contributes to the a ubiquinone binding site. 4 helical membrane passes run Ile-227–Ser-247, Leu-289–His-309, Leu-321–Ser-341, and Phe-348–Pro-368.

This sequence belongs to the cytochrome b family. In terms of assembly, the cytochrome bc1 complex contains 11 subunits: 3 respiratory subunits (MT-CYB, CYC1 and UQCRFS1), 2 core proteins (UQCRC1 and UQCRC2) and 6 low-molecular weight proteins (UQCRH/QCR6, UQCRB/QCR7, UQCRQ/QCR8, UQCR10/QCR9, UQCR11/QCR10 and a cleavage product of UQCRFS1). This cytochrome bc1 complex then forms a dimer. Requires heme b as cofactor.

The protein resides in the mitochondrion inner membrane. Its function is as follows. Component of the ubiquinol-cytochrome c reductase complex (complex III or cytochrome b-c1 complex) that is part of the mitochondrial respiratory chain. The b-c1 complex mediates electron transfer from ubiquinol to cytochrome c. Contributes to the generation of a proton gradient across the mitochondrial membrane that is then used for ATP synthesis. The polypeptide is Cytochrome b (MT-CYB) (Paradisaea rubra (Red bird of paradise)).